The sequence spans 201 residues: Adenylyl-sulfate kinase (201 aa).

35–42 provides a ligand contact to ATP; that stretch reads GLSGSGKS. The Phosphoserine intermediate role is filled by Ser-109.

Belongs to the APS kinase family.

The enzyme catalyses adenosine 5'-phosphosulfate + ATP = 3'-phosphoadenylyl sulfate + ADP + H(+). The protein operates within sulfur metabolism; hydrogen sulfide biosynthesis; sulfite from sulfate: step 2/3. Its function is as follows. Catalyzes the synthesis of activated sulfate. The polypeptide is Adenylyl-sulfate kinase (Salmonella gallinarum (strain 287/91 / NCTC 13346)).